The primary structure comprises 76 residues: MPHVDIKCFPRDLNDEQKTALAADIAEVIIRHFNSKDSSVSVALNQVQQEDWKAQVWDTEIGPKLDELIKKPGYSM.

Catalysis depends on P2, which acts as the Proton acceptor; via imino nitrogen.

The protein belongs to the 4-oxalocrotonate tautomerase family. PptA subfamily. In terms of assembly, homodimer.

It localises to the cytoplasm. The protein is Tautomerase PptA of Enterobacter sp. (strain 638).